The sequence spans 62 residues: Cuticle protein 6.4 (62 aa).

Functionally, component of the cuticle of migratory locust which contains more than 100 different structural proteins. This chain is Cuticle protein 6.4, found in Locusta migratoria (Migratory locust).